Reading from the N-terminus, the 447-residue chain is N-succinylarginine dihydrolase (447 aa).

Substrate is bound by residues 19 to 28 (AGLSFGNEAS), Asn110, and 137 to 138 (HR). Residue Glu174 is part of the active site. A substrate-binding site is contributed by Arg212. Residue His248 is part of the active site. Substrate is bound by residues Asp250 and Asn359. Catalysis depends on Cys365, which acts as the Nucleophile.

It belongs to the succinylarginine dihydrolase family. Homodimer.

It catalyses the reaction N(2)-succinyl-L-arginine + 2 H2O + 2 H(+) = N(2)-succinyl-L-ornithine + 2 NH4(+) + CO2. The protein operates within amino-acid degradation; L-arginine degradation via AST pathway; L-glutamate and succinate from L-arginine: step 2/5. In terms of biological role, catalyzes the hydrolysis of N(2)-succinylarginine into N(2)-succinylornithine, ammonia and CO(2). This is N-succinylarginine dihydrolase from Salmonella paratyphi A (strain ATCC 9150 / SARB42).